A 430-amino-acid chain; its full sequence is Glutamyl-tRNA reductase (430 aa).

Residues 50–53 (TCNR), Ser-108, 113–115 (EPQ), and Gln-119 contribute to the substrate site. Cys-51 functions as the Nucleophile in the catalytic mechanism. 188-193 (GAGEMA) contacts NADP(+).

It belongs to the glutamyl-tRNA reductase family. Homodimer.

The enzyme catalyses (S)-4-amino-5-oxopentanoate + tRNA(Glu) + NADP(+) = L-glutamyl-tRNA(Glu) + NADPH + H(+). It functions in the pathway porphyrin-containing compound metabolism; protoporphyrin-IX biosynthesis; 5-aminolevulinate from L-glutamyl-tRNA(Glu): step 1/2. Functionally, catalyzes the NADPH-dependent reduction of glutamyl-tRNA(Glu) to glutamate 1-semialdehyde (GSA). The polypeptide is Glutamyl-tRNA reductase (Desulfovibrio desulfuricans (strain ATCC 27774 / DSM 6949 / MB)).